Reading from the N-terminus, the 345-residue chain is GTP 3',8-cyclase (345 aa).

A Radical SAM core domain is found at 10 to 236 (SHGRPLGVLR…QCVSSHWPLD (227 aa)). GTP is bound at residue Arg-19. The [4Fe-4S] cluster site is built by Cys-26 and Cys-30. Position 32 (Tyr-32) interacts with S-adenosyl-L-methionine. Cys-33 lines the [4Fe-4S] cluster pocket. A GTP-binding site is contributed by Arg-65. Gly-69 contributes to the S-adenosyl-L-methionine binding site. Thr-98 is a GTP binding site. Position 123 (Ser-123) interacts with S-adenosyl-L-methionine. A GTP-binding site is contributed by Lys-172. Met-206 serves as a coordination point for S-adenosyl-L-methionine. Residues Cys-269 and Cys-272 each contribute to the [4Fe-4S] cluster site. Position 274–276 (274–276 (RIR)) interacts with GTP. A [4Fe-4S] cluster-binding site is contributed by Cys-286.

The protein belongs to the radical SAM superfamily. MoaA family. In terms of assembly, monomer and homodimer. Requires [4Fe-4S] cluster as cofactor.

The enzyme catalyses GTP + AH2 + S-adenosyl-L-methionine = (8S)-3',8-cyclo-7,8-dihydroguanosine 5'-triphosphate + 5'-deoxyadenosine + L-methionine + A + H(+). It participates in cofactor biosynthesis; molybdopterin biosynthesis. Catalyzes the cyclization of GTP to (8S)-3',8-cyclo-7,8-dihydroguanosine 5'-triphosphate. The protein is GTP 3',8-cyclase of Synechococcus sp. (strain CC9902).